The chain runs to 715 residues: D-ribulokinase YDR109C (715 aa).

The interval 1 to 27 is disordered; it reads MKSRKRQNNMQNETREPAVLSSQETSI.

Belongs to the FGGY kinase family.

The enzyme catalyses D-ribulose + ATP = D-ribulose 5-phosphate + ADP + H(+). It functions in the pathway carbohydrate metabolism; pentose and glucuronate interconversion. Its function is as follows. Catalyzes ATP-dependent phosphorylation of D-ribulose at C-5 to form D-ribulose 5-phosphate. Postulated to function in a metabolite repair mechanism by preventing toxic accumulation of free D-ribulose formed by non-specific phosphatase activities. Alternatively, may play a role in regulating D-ribulose 5-phosphate recycling in the pentose phosphate pathway. This is D-ribulokinase YDR109C from Saccharomyces cerevisiae (strain ATCC 204508 / S288c) (Baker's yeast).